Consider the following 146-residue polypeptide: Protein PBDC1 homolog (146 aa).

Belongs to the PBDC1 family.

It is found in the cytoplasm. In Saccharomyces cerevisiae (strain ATCC 204508 / S288c) (Baker's yeast), this protein is Protein PBDC1 homolog.